Consider the following 199-residue polypeptide: Molybdenum cofactor guanylyltransferase (199 aa).

Residues 12–14 (LAG), Lys-25, Asn-53, Asp-71, and Asp-101 contribute to the GTP site. Asp-101 contributes to the Mg(2+) binding site.

It belongs to the MobA family. As to quaternary structure, monomer. It depends on Mg(2+) as a cofactor.

Its subcellular location is the cytoplasm. The catalysed reaction is Mo-molybdopterin + GTP + H(+) = Mo-molybdopterin guanine dinucleotide + diphosphate. Its function is as follows. Transfers a GMP moiety from GTP to Mo-molybdopterin (Mo-MPT) cofactor (Moco or molybdenum cofactor) to form Mo-molybdopterin guanine dinucleotide (Mo-MGD) cofactor. The polypeptide is Molybdenum cofactor guanylyltransferase (Cupriavidus necator (strain ATCC 17699 / DSM 428 / KCTC 22496 / NCIMB 10442 / H16 / Stanier 337) (Ralstonia eutropha)).